Here is a 646-residue protein sequence, read N- to C-terminus: Leukotriene A-4 hydrolase homolog (646 aa).

Residues 172-174 (QCQ) and 307-312 (PYGGME) contribute to the a peptide site. H336 is a Zn(2+) binding site. E337 functions as the Proton acceptor in the catalytic mechanism. Positions 340 and 359 each coordinate Zn(2+). Catalysis depends on Y424, which acts as the Proton donor.

It belongs to the peptidase M1 family. The cofactor is Zn(2+).

The protein resides in the cytoplasm. It is found in the nucleus. It catalyses the reaction leukotriene A4 + H2O = leukotriene B4. The protein operates within lipid metabolism; leukotriene B4 biosynthesis. Aminopeptidase that preferentially cleaves tripeptides. Also has low epoxide hydrolase activity (in vitro). Can hydrolyze an epoxide moiety of LTA(4) to form LTB(4) (in vitro). The chain is Leukotriene A-4 hydrolase homolog from Botryotinia fuckeliana (strain B05.10) (Noble rot fungus).